The following is a 151-amino-acid chain: Deoxyuridine 5'-triphosphate nucleotidohydrolase (151 aa).

Substrate is bound by residues 69-71 (RSG), Asn-82, and 86-88 (TID).

The protein belongs to the dUTPase family. It depends on Mg(2+) as a cofactor.

The enzyme catalyses dUTP + H2O = dUMP + diphosphate + H(+). It functions in the pathway pyrimidine metabolism; dUMP biosynthesis; dUMP from dCTP (dUTP route): step 2/2. In terms of biological role, this enzyme is involved in nucleotide metabolism: it produces dUMP, the immediate precursor of thymidine nucleotides and it decreases the intracellular concentration of dUTP so that uracil cannot be incorporated into DNA. This chain is Deoxyuridine 5'-triphosphate nucleotidohydrolase, found in Rhodospirillum centenum (strain ATCC 51521 / SW).